The primary structure comprises 438 residues: Plasmalemma vesicle-associated protein (438 aa).

At 1 to 26 (MGLSMDRSPYARTGDQQRGCWYYLRY) the chain is on the cytoplasmic side. Residues 27–47 (FFLFVSLIQFLIILGLVLFMI) form a helical; Signal-anchor for type II membrane protein membrane-spanning segment. The Extracellular segment spans residues 48-438 (YGNVHATTES…VVNPAAQPSG (391 aa)). Asn82, Asn88, Asn112, and Asn150 each carry an N-linked (GlcNAc...) asparagine glycan. Coiled-coil stretches lie at residues 140-160 (KQCQ…LFKL), 189-224 (KRQT…QSLC), and 281-383 (EELA…ISAL). Residues 391–413 (SLPAVPPRVSGPPPNPPPIDPAS) are disordered. Over residues 394–410 (AVPPRVSGPPPNPPPID) the composition is skewed to pro residues.

Homodimer. Expressed in lung, kidney, spleen, heart, muscle, eye, pancreas, thyroid, thymus, submaxillary gland, prostate, epididymis, uterus and liver.

The protein resides in the cell membrane. Its subcellular location is the membrane. It is found in the caveola. It localises to the cytoplasm. The protein localises to the perinuclear region. Functionally, endothelial cell-specific membrane protein involved in the formation of the diaphragms that bridge endothelial fenestrae. It is also required for the formation of stomata of caveolae and transendothelial channels. Functions in microvascular permeability, endothelial fenestrae contributing to the passage of water and solutes and regulating transcellular versus paracellular flow in different organs. Plays a specific role in embryonic development. The chain is Plasmalemma vesicle-associated protein (Plvap) from Mus musculus (Mouse).